Reading from the N-terminus, the 743-residue chain is Coiled-coil domain-containing protein 30 (743 aa).

Composition is skewed to basic and acidic residues over residues 1–22 and 133–193; these read MSQE…REKQ and SPKE…MKPE. Disordered regions lie at residues 1–25, 114–193, 208–233, and 695–715; these read MSQE…QLAS, ENIC…MKPE, SLLQ…GDKL, and SKEA…LVCS. Coiled coils occupy residues 21–98 and 165–580; these read KQLA…QLNH and REGQ…LIHS. Low complexity predominate over residues 208–223; the sequence is SLLQSQSSGDSSDDSG.

This sequence belongs to the prefoldin subunit beta family.

This is Coiled-coil domain-containing protein 30 (CCDC30) from Macaca fascicularis (Crab-eating macaque).